Here is an 884-residue protein sequence, read N- to C-terminus: Alanine--tRNA ligase (884 aa).

Zn(2+) is bound by residues His-574, His-578, Cys-675, and His-679.

Belongs to the class-II aminoacyl-tRNA synthetase family. Zn(2+) is required as a cofactor.

The protein resides in the cytoplasm. It catalyses the reaction tRNA(Ala) + L-alanine + ATP = L-alanyl-tRNA(Ala) + AMP + diphosphate. Catalyzes the attachment of alanine to tRNA(Ala) in a two-step reaction: alanine is first activated by ATP to form Ala-AMP and then transferred to the acceptor end of tRNA(Ala). Also edits incorrectly charged Ser-tRNA(Ala) and Gly-tRNA(Ala) via its editing domain. This chain is Alanine--tRNA ligase, found in Ralstonia nicotianae (strain ATCC BAA-1114 / GMI1000) (Ralstonia solanacearum).